The chain runs to 211 residues: FMN-dependent NADH:quinone oxidoreductase 3 (211 aa).

102–105 (MWNF) contacts FMN.

The protein belongs to the azoreductase type 1 family. As to quaternary structure, homodimer. It depends on FMN as a cofactor.

It carries out the reaction 2 a quinone + NADH + H(+) = 2 a 1,4-benzosemiquinone + NAD(+). The enzyme catalyses N,N-dimethyl-1,4-phenylenediamine + anthranilate + 2 NAD(+) = 2-(4-dimethylaminophenyl)diazenylbenzoate + 2 NADH + 2 H(+). In terms of biological role, quinone reductase that provides resistance to thiol-specific stress caused by electrophilic quinones. Functionally, also exhibits azoreductase activity. Catalyzes the reductive cleavage of the azo bond in aromatic azo compounds to the corresponding amines. The protein is FMN-dependent NADH:quinone oxidoreductase 3 of Bacillus cereus (strain ZK / E33L).